The sequence spans 218 residues: MIP18 family protein galla-1 (218 aa).

Positions 1–59 are disordered; the sequence is MLSYIKRKLSESDSGVSSVATVTSSCGGDSGRAGGTGSSESGTGSSSASISGRSQNADE. The span at 12 to 27 shows a compositional bias: low complexity; sequence SDSGVSSVATVTSSCG. The residue at position 14 (S14) is a Phosphoserine. Gly residues predominate over residues 28–37; the sequence is GDSGRAGGTG. Over residues 38–54 the composition is skewed to low complexity; sequence SSESGTGSSSASISGRS. S65 carries the phosphoserine modification.

Belongs to the MIP18 family. Component of the CGX complex composed of crb, galla (galla-1 or galla-2) and Xpd. Interacts with crb (via intracellular domain). Is not able to interact with Xpd in the absence of crb.

The protein localises to the apical cell membrane. Its subcellular location is the cytoplasm. It is found in the cytoskeleton. The protein resides in the spindle. Component of the crb-galla-Xpd (CGX) complex which is essential for proper mitotic chromosome segregation in early embryos. The CGX complex is also required for cell proliferation in developing wing disks. In the CGX complex, acts with crb to recruit Xpd thus forming the functional complex. The protein is MIP18 family protein galla-1 of Drosophila melanogaster (Fruit fly).